Here is a 469-residue protein sequence, read N- to C-terminus: MRINFVLLITLILPWFVSGDSSEEAVDAPLDVKDDTGNKDYYKDSTGAYHFDKLIVTPLEYRDGESWKQSVIYCDLIFAKENKEEKGSFVKAQLKEDAEHPFIYRLLKLQTPLETYRGFIDGKNTEILDEIKSINLFEDFLSESLVPEISPSVNIPIDETALYCFIGIQETEPIRIPWPVLTVEFYGDAPPPESYFRTIKSTLLAISMFLGFITLTWLLRCIKSQSGVQPAQISLAFWVFIFVFTHSYQVYSMVAIGRGSFSTWYVVSFLFSLVFEEGLEQSAYTSFLLVLCFGLGITKPALVKYYVYLAFVAFVQGLFVTFAPLSYPVMSFYGVRGILLKLIWNIYTFVYYGLPFFAVYRLYKQAGESRKLGFEAKYSLLRTCYIALAAVTVSNCLFLGVVRPLLGSQLSLGFQLITSCITFVDFLVFAFLFDCSKFVFLKYQPIPFEWYALESMESLNLEPAPDRKV.

The signal sequence occupies residues 1 to 19; sequence MRINFVLLITLILPWFVSG. A run of 7 helical transmembrane segments spans residues 199–219, 236–256, 283–303, 305–325, 338–358, 386–406, and 413–433; these read IKST…TWLL, AFWV…MVAI, AYTS…PALV, YYVY…FAPL, ILLK…PFFA, IALA…RPLL, and GFQL…AFLF.

The protein resides in the membrane. This is an uncharacterized protein from Schizosaccharomyces pombe (strain 972 / ATCC 24843) (Fission yeast).